The sequence spans 157 residues: DNA gyrase inhibitor (157 aa).

This sequence belongs to the DNA gyrase inhibitor family. As to quaternary structure, interacts with DNA gyrase.

The protein localises to the cytoplasm. Its function is as follows. Inhibits the supercoiling activity of DNA gyrase. Acts by inhibiting DNA gyrase at an early step, prior to (or at the step of) binding of DNA by the gyrase. It protects cells against toxins that target DNA gyrase, by inhibiting activity of these toxins and reducing the formation of lethal double-strand breaks in the cell. This chain is DNA gyrase inhibitor, found in Cronobacter turicensis (strain DSM 18703 / CCUG 55852 / LMG 23827 / z3032).